Consider the following 510-residue polypeptide: Protein HGV2 (510 aa).

The segment at 95–227 is disordered; sequence GVPEEDADGD…KENESEEDPD (133 aa). A compositionally biased stretch (acidic residues) spans 98–110; sequence EEDADGDSDQEQE. 2 stretches are compositionally biased toward basic and acidic residues: residues 111 to 129 and 142 to 199; these read QFEK…REEV and EERG…DKPV. The span at 204–217 shows a compositional bias: low complexity; sequence TEEPGTSGTSASSS. TPR repeat units lie at residues 260–293 and 302–335; these read AQCH…QKDL and AETY…LEAR. Positions 391–510 are disordered; the sequence is DGSPFRQASE…TPKKDAAKRR (120 aa). Residues 398–411 are compositionally biased toward low complexity; that stretch reads ASEGESSSGLGAST. 2 consecutive short sequence motifs (nuclear localization signal) follow at residues 444 to 451 and 465 to 471; these read VRRKRPSP and SKKAKQE. The span at 459 to 471 shows a compositional bias: basic and acidic residues; that stretch reads ESKENESKKAKQE.

It belongs to the NASP family. Embryo and larvae.

The protein localises to the nucleus. Its function is as follows. May function as a nucleosome assembly factor during rapid embryonic cell divisions. This is Protein HGV2 (HGV2) from Halocynthia roretzi (Sea squirt).